We begin with the raw amino-acid sequence, 676 residues long: Envelope glycoprotein (676 aa).

A signal peptide spans 1-32; it reads MGGLSLLQLPRDKFRKSSFFVWVIILFQKAFS. Residues 33–185 form a receptor binding region; sequence MPLGVVTNST…FAEGVIAFLI (153 aa). Residues 33 to 650 lie on the Extracellular side of the membrane; that stretch reads MPLGVVTNST…DDNWWTGWRQ (618 aa). Asn-40 carries an N-linked (GlcNAc...) asparagine; by host glycan. Intrachain disulfides connect Cys-53-Cys-609, Cys-108-Cys-135, Cys-121-Cys-147, Cys-511-Cys-556, and Cys-601-Cys-608. 8 N-linked (GlcNAc...) asparagine; by host glycosylation sites follow: Asn-204, Asn-208, Asn-238, Asn-257, Asn-268, Asn-296, Asn-314, and Asn-366. The mucin-like region stretch occupies residues 305–485; it reads ELSFEALSLN…STSNGLITST (181 aa). Disordered regions lie at residues 337–373 and 404–461; these read RKYSDLVPKNSPGMVPLHIPEGETTLPSQNSTEGRRV and RPSS…LTTP. 2 stretches are compositionally biased toward low complexity: residues 405 to 428 and 449 to 461; these read PSSSQIPSSSPTTAPSPEAQTPTT and PGPTTEAPTLTTP. Asn-463 carries an N-linked (GlcNAc...) asparagine; by host glycan. The interval 524–539 is fusion peptide; sequence HNAAGIAWIPYFGPGA. Residues 554-595 are a coiled coil; sequence LVCGLRQLANETTQALQLFLRATTELRTYTILNRKAIDFLLR. Asn-563 carries N-linked (GlcNAc...) asparagine; by host glycosylation. A coiled-coil region spans residues 615–634; sequence WTKNITDKINQIIHDFIDNP. Asn-618 carries N-linked (GlcNAc...) asparagine; by host glycosylation. The helical transmembrane segment at 651-671 threads the bilayer; the sequence is WIPAGIGITGIIIAIIALLCV. 2 S-palmitoyl cysteine; by host lipidation sites follow: Cys-670 and Cys-672. Topologically, residues 672-676 are cytoplasmic; that stretch reads CKLLC.

The protein belongs to the filoviruses glycoprotein family. As to quaternary structure, homotrimer; each monomer consists of a GP1 and a GP2 subunit linked by disulfide bonds. The resulting peplomers (GP1,2) protrude from the virus surface as spikes. Interacts with host integrin alpha-V/ITGAV. Interacts with host CLEC10A. Binds also to host CD209 and CLEC4M/DC-SIGN(R). Interacts with host FOLR1. Interacts with BST2; this interaction inhibits the antiviral effect of BST2 and this allows viral release from infected cells. Interacts with host FCN1; this interaction enhances viral entry. Interacts with host TLR4; this interaction induces cell death in T-lymphocytes or proinflammatory cytokines and SOCS1 production in monocytes. Interacts with host entry receptor NPC1. In terms of assembly, GP1 and GP2delta are part of GP1,2delta soluble complexes released by ectodomain shedding. Post-translationally, N-glycosylated. O-glycosylated in the mucin-like region. In terms of processing, palmitoylation of GP2 is not required for its function. Post-translationally, specific enzymatic cleavages in vivo yield mature proteins. The precursor is processed into GP1 and GP2 by host cell furin in the trans Golgi, and maybe by other host proteases, to yield the mature GP1 and GP2 proteins. The cleavage site corresponds to the furin optimal cleavage sequence [KR]-X-[KR]-R. This cleavage does not seem to be required for function. After the internalization of the virus into cell endosomes, GP1 C-terminus is removed by the endosomal proteases cathepsin B, cathepsin L, or both, leaving a 19-kDa N-terminal fragment which is further digested by cathepsin B. Proteolytic processing of GP1,2 by host ADAM17 can remove the transmembrane anchor of GP2 and leads to shedding of complexes consisting in GP1 and truncated GP2 (GP1,2delta).

It localises to the virion membrane. The protein resides in the host cell membrane. Its subcellular location is the secreted. In terms of biological role, trimeric GP1,2 complexes form the virion surface spikes and mediate the viral entry processes, with GP1 acting as the receptor-binding subunit and GP2 as the membrane fusion subunit. At later times of infection, down-regulates the expression of various host cell surface molecules that are essential for immune surveillance and cell adhesion. Down-modulates several integrins including ITGA1, ITGA2, ITGA3, ITGA4, ITGA5, ITGA6, ITGAV and ITGB1. This decrease in cell adhesion molecules may lead to cell detachment, contributing to the disruption of blood vessel integrity and hemorrhages developed during infection (cytotoxicity). Interacts with host TLR4 and thereby stimulates the differentiation and activation of monocytes leading to bystander death of T-lymphocytes. Down-regulates as well the function of host natural killer cells. Counteracts the antiviral effect of host BST2/tetherin that restricts release of progeny virions from infected cells. However, cooperates with VP40 and host BST2 to activate canonical NF-kappa-B pathway in a manner dependent on neddylation. Its function is as follows. Functions as a decoy for anti-GP1,2 antibodies thereby contributing to viral immune evasion. Interacts and activates host macrophages and dendritic cells inducing up-regulation of cytokine transcription. This effect is mediated throught activation of host TLR4. Functionally, responsible for binding to the receptor(s) on target cells. Interacts with CD209/DC-SIGN and CLEC4M/DC-SIGNR which act as cofactors for virus entry into dendritic cells (DCs) and endothelial cells. Binding to the macrophage specific lectin CLEC10A also seems to enhance virus infectivity. Interaction with FOLR1/folate receptor alpha may be a cofactor for virus entry in some cell types, although results are contradictory. Members of the Tyro3 receptor tyrosine kinase family also seem to be cell entry factors in filovirus infection. Once attached, the virions are internalized through clathrin-dependent endocytosis and/or macropinocytosis. After internalization of the virus into the endosomes of the host cell, proteolysis of GP1 by two cysteine proteases, CTSB/cathepsin B and CTSL/cathepsin L removes the glycan cap and allows GP1 binding to the host entry receptor NPC1. NPC1-binding, Ca(2+) and acidic pH induce a conformational change of GP2, which unmasks its fusion peptide and permit membranes fusion. Acts as a class I viral fusion protein. Under the current model, the protein has at least 3 conformational states: pre-fusion native state, pre-hairpin intermediate state, and post-fusion hairpin state. During viral and target cell membrane fusion, the coiled coil regions (heptad repeats) assume a trimer-of-hairpins structure, positioning the fusion peptide in close proximity to the C-terminal region of the ectodomain. The formation of this structure appears to drive apposition and subsequent fusion of viral and target cell membranes. Responsible for penetration of the virus into the cell cytoplasm by mediating the fusion of the membrane of the endocytosed virus particle with the endosomal membrane. Low pH in endosomes induces an irreversible conformational change in GP2, releasing the fusion hydrophobic peptide. In Sudan ebolavirus (strain Human/Uganda/Gulu/2000) (SEBOV), this protein is Envelope glycoprotein (GP).